Here is a 488-residue protein sequence, read N- to C-terminus: Ribulose bisphosphate carboxylase large chain (488 aa).

Residues N127 and T177 each contribute to the substrate site. K179 (proton acceptor) is an active-site residue. Position 181 (K181) interacts with substrate. Residues K205, D207, and E208 each coordinate Mg(2+). K205 carries the post-translational modification N6-carboxylysine. Catalysis depends on H297, which acts as the Proton acceptor. Substrate is bound by residues R298, H330, and S382.

Belongs to the RuBisCO large chain family. Type I subfamily. Heterohexadecamer of 8 large chains and 8 small chains. Mg(2+) is required as a cofactor.

Its subcellular location is the plastid. The protein resides in the chloroplast. It catalyses the reaction 2 (2R)-3-phosphoglycerate + 2 H(+) = D-ribulose 1,5-bisphosphate + CO2 + H2O. The catalysed reaction is D-ribulose 1,5-bisphosphate + O2 = 2-phosphoglycolate + (2R)-3-phosphoglycerate + 2 H(+). In terms of biological role, ruBisCO catalyzes two reactions: the carboxylation of D-ribulose 1,5-bisphosphate, the primary event in carbon dioxide fixation, as well as the oxidative fragmentation of the pentose substrate in the photorespiration process. Both reactions occur simultaneously and in competition at the same active site. This chain is Ribulose bisphosphate carboxylase large chain (rbcL), found in Pyropia haitanensis (Red seaweed).